The primary structure comprises 333 residues: tRNA N6-adenosine threonylcarbamoyltransferase (333 aa).

Fe cation-binding residues include His118 and His122. Substrate-binding positions include 140 to 144 (VVSGG), Asp173, Gly186, and Asn274. Asp298 contacts Fe cation.

The protein belongs to the KAE1 / TsaD family. Fe(2+) serves as cofactor.

The protein localises to the cytoplasm. The enzyme catalyses L-threonylcarbamoyladenylate + adenosine(37) in tRNA = N(6)-L-threonylcarbamoyladenosine(37) in tRNA + AMP + H(+). Functionally, required for the formation of a threonylcarbamoyl group on adenosine at position 37 (t(6)A37) in tRNAs that read codons beginning with adenine. Is involved in the transfer of the threonylcarbamoyl moiety of threonylcarbamoyl-AMP (TC-AMP) to the N6 group of A37, together with TsaE and TsaB. TsaD likely plays a direct catalytic role in this reaction. This is tRNA N6-adenosine threonylcarbamoyltransferase from Deinococcus geothermalis (strain DSM 11300 / CIP 105573 / AG-3a).